Consider the following 140-residue polypeptide: Cytochrome B5 isoform D (140 aa).

The 77-residue stretch at 5 to 81 folds into the Cytochrome b5 heme-binding domain; sequence GKVFTLSEVS…LDEYYVGDID (77 aa). Heme contacts are provided by histidine 40 and histidine 64. Residues 109–129 traverse the membrane as a helical segment; that stretch reads FVIKLLQFLVPLLILGLAFGI.

This sequence belongs to the cytochrome b5 family. In terms of assembly, interacts with CER1, BI-1, FAH1 and FAH2. In terms of tissue distribution, expressed in roots, stems, leaves, flowers and siliques.

The protein localises to the endoplasmic reticulum membrane. Functionally, membrane bound hemoprotein which function as an electron carrier for several membrane bound oxygenases, including fatty acid desaturases. In Arabidopsis thaliana (Mouse-ear cress), this protein is Cytochrome B5 isoform D.